Consider the following 389-residue polypeptide: Phospho-N-acetylmuramoyl-pentapeptide-transferase (389 aa).

10 consecutive transmembrane segments (helical) span residues 25–45 (RAVM…PWVI), 74–94 (MGGV…CDWG), 97–117 (FIWV…VDDY), 134–154 (FFWQ…SVSE), 190–210 (VSYP…IVGS), 222–242 (GLVI…AYVM), 259–279 (AGEL…FLWF), 286–306 (VFMG…VAVI), 311–331 (IVLF…MLQV), and 366–386 (QVTV…LSTL).

The protein belongs to the glycosyltransferase 4 family. MraY subfamily. It depends on Mg(2+) as a cofactor.

The protein resides in the cell inner membrane. It catalyses the reaction UDP-N-acetyl-alpha-D-muramoyl-L-alanyl-gamma-D-glutamyl-meso-2,6-diaminopimeloyl-D-alanyl-D-alanine + di-trans,octa-cis-undecaprenyl phosphate = di-trans,octa-cis-undecaprenyl diphospho-N-acetyl-alpha-D-muramoyl-L-alanyl-D-glutamyl-meso-2,6-diaminopimeloyl-D-alanyl-D-alanine + UMP. It participates in cell wall biogenesis; peptidoglycan biosynthesis. Catalyzes the initial step of the lipid cycle reactions in the biosynthesis of the cell wall peptidoglycan: transfers peptidoglycan precursor phospho-MurNAc-pentapeptide from UDP-MurNAc-pentapeptide onto the lipid carrier undecaprenyl phosphate, yielding undecaprenyl-pyrophosphoryl-MurNAc-pentapeptide, known as lipid I. The sequence is that of Phospho-N-acetylmuramoyl-pentapeptide-transferase from Cupriavidus pinatubonensis (strain JMP 134 / LMG 1197) (Cupriavidus necator (strain JMP 134)).